Reading from the N-terminus, the 364-residue chain is Cobalt-precorrin-5B C(1)-methyltransferase (364 aa).

It belongs to the CbiD family.

It catalyses the reaction Co-precorrin-5B + S-adenosyl-L-methionine = Co-precorrin-6A + S-adenosyl-L-homocysteine. It participates in cofactor biosynthesis; adenosylcobalamin biosynthesis; cob(II)yrinate a,c-diamide from sirohydrochlorin (anaerobic route): step 6/10. Its function is as follows. Catalyzes the methylation of C-1 in cobalt-precorrin-5B to form cobalt-precorrin-6A. This Pseudomonas putida (strain GB-1) protein is Cobalt-precorrin-5B C(1)-methyltransferase.